The primary structure comprises 279 residues: Putative hydro-lyase GDI0188/Gdia_2258 (279 aa).

The protein belongs to the D-glutamate cyclase family.

This chain is Putative hydro-lyase GDI0188/Gdia_2258, found in Gluconacetobacter diazotrophicus (strain ATCC 49037 / DSM 5601 / CCUG 37298 / CIP 103539 / LMG 7603 / PAl5).